Reading from the N-terminus, the 342-residue chain is Autoinducer 2 import system permease protein LsrC (342 aa).

Over 1–13 (MLKFIQNNREITA) the chain is Periplasmic. The chain crosses the membrane as a helical span at residues 14–34 (LLAVVLLFVLPGFLDRQYLSV). Residues 35 to 38 (QTLT) are Cytoplasmic-facing. A helical transmembrane segment spans residues 39-59 (MVYSSAQILILLAMGATLVML). Over 60 to 69 (TRNIDVSVGS) the chain is Periplasmic. A helical membrane pass occupies residues 70–90 (ITGMCAVLLGMLLNAGYSLPV). Topologically, residues 91-92 (AC) are cytoplasmic. A helical membrane pass occupies residues 93-113 (VATLLLGLLAGFFNGALVAWL). A topological domain (periplasmic) is located at residue lysine 114. Residues 115 to 135 (IPAIVATLGTLGLYRGIMLLW) traverse the membrane as a helical segment. Residues 136–154 (TGGKWIEGLPAELKQLSAP) are Cytoplasmic-facing. A helical transmembrane segment spans residues 155 to 175 (LLLGISAIGWLTIILVAFMAW). The Periplasmic portion of the chain corresponds to 176-212 (LLAKTAFGRSFYATGDNLQGARQLGVRTEAIRIVAFS). Residues 213-233 (LNGCMAALAGIVFASQIGFIL) traverse the membrane as a helical segment. Residues 234–251 (NQTGTGLEMKAIAACVLG) are Cytoplasmic-facing. Residues 252–272 (GISLLGGSGAIIGAVLGAWFL) traverse the membrane as a helical segment. The Periplasmic segment spans residues 273–283 (TQIDSVLVLLR). The helical transmembrane segment at 284–304 (IPAWWNDFIAGLVLLAVLVFD) threads the bilayer. Over 305-342 (GRLRCALERNLRRQKYARFMTPPPSVKPASSGKKREAA) the chain is Cytoplasmic.

This sequence belongs to the binding-protein-dependent transport system permease family. AraH/RbsC subfamily. The complex is composed of two ATP-binding proteins (LsrA), two transmembrane proteins (LsrC and LsrD) and a solute-binding protein (LsrB).

The protein resides in the cell inner membrane. Part of the ABC transporter complex LsrABCD involved in autoinducer 2 (AI-2) import. Probably responsible for the translocation of the substrate across the membrane. The chain is Autoinducer 2 import system permease protein LsrC (lsrC) from Shigella flexneri.